The chain runs to 403 residues: Putative F-box protein At5g41500 (403 aa).

The region spanning 2 to 47 is the F-box domain; sequence ATTISNLPRELIEEILSRVPLRAMKAMRLTCKSWNNLSKSESFMKM.

The chain is Putative F-box protein At5g41500 from Arabidopsis thaliana (Mouse-ear cress).